A 92-amino-acid polypeptide reads, in one-letter code: Small ribosomal subunit protein uS19 (92 aa).

It belongs to the universal ribosomal protein uS19 family.

In terms of biological role, protein S19 forms a complex with S13 that binds strongly to the 16S ribosomal RNA. The chain is Small ribosomal subunit protein uS19 from Bifidobacterium longum subsp. infantis (strain ATCC 15697 / DSM 20088 / JCM 1222 / NCTC 11817 / S12).